The sequence spans 202 residues: GTP cyclohydrolase 1 (202 aa).

Zn(2+)-binding residues include cysteine 90, histidine 93, and cysteine 163.

The protein belongs to the GTP cyclohydrolase I family. Toroid-shaped homodecamer, composed of two pentamers of five dimers.

The enzyme catalyses GTP + H2O = 7,8-dihydroneopterin 3'-triphosphate + formate + H(+). It functions in the pathway cofactor biosynthesis; 7,8-dihydroneopterin triphosphate biosynthesis; 7,8-dihydroneopterin triphosphate from GTP: step 1/1. This Mycobacterium bovis (strain ATCC BAA-935 / AF2122/97) protein is GTP cyclohydrolase 1 (folE).